Reading from the N-terminus, the 2136-residue chain is Protein CELLULOSE SYNTHASE INTERACTIVE 3 (2136 aa).

42 ARM repeats span residues 27–66 (MEMD…LLGI), 71–111 (REAR…VLCK), 113–152 (KDLR…EVSS), 159–201 (HIGM…NLCG), 204–243 (DGYW…RLVL), 246–286 (CDSI…ALSA), 289–337 (DEAK…NVFG), 376–417 (PESS…SLYG), 419–458 (SSLS…GLCH), 461–500 (VGIW…ILTA), 503–542 (DDSK…NLCC), 545–584 (EEIR…KLVH), 586–618 (ADPA…HVLS), 619–663 (KASQ…DLFS), 666–705 (QDIC…ALSR), 711–750 (NNKK…NLLS), 752–791 (PDIA…QLLK), 811–848 (SLVD…FSYP), 849–887 (PWIA…RLCS), 936–980 (QLIT…GFLE), 1013–1041 (SVDA…YTSS), 1042–1083 (AQAE…TLAV), 1109–1149 (RGIN…SLVK), 1163–1204 (EDVR…RIAD), 1207–1247 (DTNK…VLFS), 1249–1288 (HELR…ELFD), 1290–1329 (ENIR…KLSS), 1333–1375 (SNTA…VVFS), 1377–1416 (KNIR…ILLD), 1418–1457 (EQHL…KLGK), 1460–1499 (VPRK…ILTN), 1518–1546 (AVLL…KQQT), 1547–1585 (LEAF…HFLT), 1587–1626 (EDFQ…KISA), 1628–1669 (WPKA…NILQ), 1670–1704 (YDAE…ALML), 1710–1750 (ASST…NNPR), 1790–1833 (SQHE…NFVM), 1836–1875 (RTNR…FLFS), 1921–1960 (PKLR…LLRH), 1969–2008 (VAKS…CLPG), and 2010–2035 (LTVN…QLTI). One can recognise a C2 domain in the interval 1989-2106 (KTCPPRFHDK…VTEGEYSGSL (118 aa)).

In terms of assembly, associates with cellulase synthase (CESA) complexes. Binds to cortical microtubules. Interacts with CESA3 and CESA6. As to expression, expressed in dark-grown hypocotyls, leaves (confined to vasculature and trichomes), stamen, pollen, developing siliques, and roots. Restricted in meristematic tissue of the shoot and root. Present in distinct punctae at the cell cortex, called microtubule-associated cellulose synthase compartments, that move with constant velocities of 10 to 3000 nm/min.

The protein localises to the cell membrane. It localises to the cytoplasm. The protein resides in the cytoskeleton. Its subcellular location is the endomembrane system. In terms of biological role, regulator of the microtubular cytoskeleton. Microtubule-associated protein involved in the association of cellulase synthase (CESA) complexes (CSCs) and cortical microtubules. Promotes dynamics of CSCs in the plasma membrane in both microtubules-dependent and microtubules-independent manners. Regulates primary cell wall biosynthesis and cellulose microfibrils organization. In Arabidopsis thaliana (Mouse-ear cress), this protein is Protein CELLULOSE SYNTHASE INTERACTIVE 3.